The chain runs to 833 residues: Leucine--tRNA ligase (833 aa).

The short motif at 41 to 52 (PYPSGAGLHVGH) is the 'HIGH' region element. The 'KMSKS' region signature appears at 610–614 (KMSKS). Lys-613 serves as a coordination point for ATP.

Belongs to the class-I aminoacyl-tRNA synthetase family.

The protein resides in the cytoplasm. It carries out the reaction tRNA(Leu) + L-leucine + ATP = L-leucyl-tRNA(Leu) + AMP + diphosphate. The sequence is that of Leucine--tRNA ligase from Streptococcus pyogenes serotype M12 (strain MGAS2096).